Here is a 43-residue protein sequence, read N- to C-terminus: uncharacterized protein (43 aa).

This is an uncharacterized protein from Saccharomyces cerevisiae (strain ATCC 204508 / S288c) (Baker's yeast).